The sequence spans 159 residues: Cell division protein SepF (159 aa).

A disordered region spans residues 23–69 (DYIEEDEEQKPASKSAFDSDHTVTPLASTTAPAASSTTKPFPGGRVN). The span at 44-64 (TVTPLASTTAPAASSTTKPFP) shows a compositional bias: low complexity.

It belongs to the SepF family. Homodimer. Interacts with FtsZ.

It is found in the cytoplasm. Functionally, cell division protein that is part of the divisome complex and is recruited early to the Z-ring. Probably stimulates Z-ring formation, perhaps through the cross-linking of FtsZ protofilaments. Its function overlaps with FtsA. In Bifidobacterium longum (strain DJO10A), this protein is Cell division protein SepF.